The primary structure comprises 627 residues: MAFNFNWSPLMADAGFYTRAQELLTAALNKSPKPPIIVDDIVVTELNLGSNPPELEILEIGDLAEDRFRGIFKMSYAGDAFLTLKTCVQANPLNTYLLTRHPFTSPQPLAAATGLTIPLQITLSDIKLSGFVILVFSKQKGITVVFRNDPLESLKVSSTFDSIPFVRDYLQKEIEGQLRILFMDELPAIIHRLSLRLWGTEYSELETTSAQVTNPSLDGPGLDPLLNPPQDPVDASGNVLSISEIASLSLDSGVEMHSLFSRKNVLRLAALTDSQRTLSLFTPSIREVVFRAWTGSMEQADGPSGLVSPMSPPLSRTHSHIATSSLSLQDAASLASSSHSRPTPPSSGFSGYGLSMGAGRHSKAHARKRKKRVVDLRRRPKSADDMESVSGESAYTETSTTTSAVSVFSGSTIPEENNDDPVTPPVSPQRTIRRPTLRDRIAARDDAERNSRRGIPAEFGHDLPTVRTSPPIANDMARIITSASNLQRQLQQQQPADSKPLPSLQETAPIRTLRPSPSSTPQYPTEKPNASNNYTSSSSPSARDPQQQQPQQLSRPSSSFIMESAQNGGILEQAWMMKMASEIARRIQDEKMGGEDPTNSSSRGGSGGGFWERPSMRSHTPPPAYRH.

In terms of domain architecture, SMP-LTD spans 1-195 (MAFNFNWSPL…LPAIIHRLSL (195 aa)). Disordered stretches follow at residues 209–230 (SAQV…NPPQ), 332–470 (ASLA…RTSP), 486–557 (LQRQ…SRPS), and 586–627 (RIQD…AYRH). 2 stretches are compositionally biased toward low complexity: residues 215–225 (PSLDGPGLDPL) and 332–341 (ASLASSSHSR). Positions 360–372 (RHSKAHARKRKKR) are enriched in basic residues. Positions 373 to 384 (VVDLRRRPKSAD) are enriched in basic and acidic residues. Residues 390–412 (SGESAYTETSTTTSAVSVFSGST) show a composition bias toward low complexity. Residues 436-451 (TLRDRIAARDDAERNS) are compositionally biased toward basic and acidic residues. Residues 528–557 (PNASNNYTSSSSPSARDPQQQQPQQLSRPS) are compositionally biased toward low complexity.

It belongs to the MDM34 family. As to quaternary structure, component of the ER-mitochondria encounter structure (ERMES) or MDM complex, composed of MMM1, MDM10, MDM12 and MDM34.

Its subcellular location is the mitochondrion outer membrane. Functionally, component of the ERMES/MDM complex, which serves as a molecular tether to connect the endoplasmic reticulum (ER) and mitochondria. Components of this complex are involved in the control of mitochondrial shape and protein biogenesis, and function in nonvesicular lipid trafficking between the ER and mitochondria. MDM34 is required for the interaction of the ER-resident membrane protein MMM1 and the outer mitochondrial membrane-resident beta-barrel protein MDM10. The protein is Mitochondrial distribution and morphology protein 34 of Blastomyces gilchristii (strain SLH14081) (Blastomyces dermatitidis).